The chain runs to 80 residues: Large ribosomal subunit protein bL31B (80 aa).

This sequence belongs to the bacterial ribosomal protein bL31 family. Type B subfamily. In terms of assembly, part of the 50S ribosomal subunit.

This Streptococcus thermophilus (strain CNRZ 1066) protein is Large ribosomal subunit protein bL31B.